Here is a 20-residue protein sequence, read N- to C-terminus: Pregnancy-associated glycoprotein 75 (20 aa).

Belongs to the peptidase A1 family. In terms of processing, N-glycosylated. Expressed in chorionic epithelium (trophectoderm).

It localises to the secreted. The polypeptide is Pregnancy-associated glycoprotein 75 (Bubalus bubalis (Domestic water buffalo)).